Here is a 267-residue protein sequence, read N- to C-terminus: Mannose-specific lectin 1 (267 aa).

Residues methionine 1–alanine 26 form the signal peptide. 2 Bulb-type lectin domains span residues threonine 29–proline 134 and asparagine 148–lysine 255. Residues glutamine 54 to asparagine 58, tyrosine 62, tryptophan 66, glutamine 67, glutamine 173 to asparagine 177, tyrosine 181, and tyrosine 185 to glutamine 188 each bind beta-D-mannose. A Carbohydrate-binding motif 1 motif is present at residues glutamine 54 to tyrosine 62. Disulfide bonds link cysteine 57/cysteine 77 and cysteine 176/cysteine 198. A Carbohydrate-binding motif 2 motif is present at residues glutamine 173 to tyrosine 181.

Forms heterotetramer of 2 chains 1 and 2 chains 2 arranged as a dimer of chain 1 and chain 2 heterodimers.

The protein localises to the secreted. In terms of biological role, mannose-specific lectin. Shows agglutinating activity towards erythrocytes from rabbit. This chain is Mannose-specific lectin 1, found in Colocasia esculenta (Wild taro).